Here is a 579-residue protein sequence, read N- to C-terminus: Aspartate--tRNA(Asp/Asn) ligase (579 aa).

L-aspartate is bound at residue E171. The aspartate stretch occupies residues 195–198 (QLFK). R217 is a binding site for L-aspartate. Residues 217–219 (RDE) and Q226 each bind ATP. Residue H444 coordinates L-aspartate. An ATP-binding site is contributed by E475. R482 provides a ligand contact to L-aspartate. An ATP-binding site is contributed by 527-530 (GLDR).

Belongs to the class-II aminoacyl-tRNA synthetase family. Type 1 subfamily. In terms of assembly, homodimer.

It localises to the cytoplasm. The enzyme catalyses tRNA(Asx) + L-aspartate + ATP = L-aspartyl-tRNA(Asx) + AMP + diphosphate. Functionally, aspartyl-tRNA synthetase with relaxed tRNA specificity since it is able to aspartylate not only its cognate tRNA(Asp) but also tRNA(Asn). Reaction proceeds in two steps: L-aspartate is first activated by ATP to form Asp-AMP and then transferred to the acceptor end of tRNA(Asp/Asn). In Thermotoga neapolitana (strain ATCC 49049 / DSM 4359 / NBRC 107923 / NS-E), this protein is Aspartate--tRNA(Asp/Asn) ligase.